The sequence spans 387 residues: Anhydro-N-acetylmuramic acid kinase (387 aa).

Residue 17–24 (GTSMDGVD) participates in ATP binding.

This sequence belongs to the anhydro-N-acetylmuramic acid kinase family.

It catalyses the reaction 1,6-anhydro-N-acetyl-beta-muramate + ATP + H2O = N-acetyl-D-muramate 6-phosphate + ADP + H(+). It participates in amino-sugar metabolism; 1,6-anhydro-N-acetylmuramate degradation. Its pathway is cell wall biogenesis; peptidoglycan recycling. Functionally, catalyzes the specific phosphorylation of 1,6-anhydro-N-acetylmuramic acid (anhMurNAc) with the simultaneous cleavage of the 1,6-anhydro ring, generating MurNAc-6-P. Is required for the utilization of anhMurNAc either imported from the medium or derived from its own cell wall murein, and thus plays a role in cell wall recycling. The polypeptide is Anhydro-N-acetylmuramic acid kinase (Burkholderia pseudomallei (strain K96243)).